A 504-amino-acid chain; its full sequence is Cytochrome P450 3A1 (504 aa).

C443 contributes to the heme binding site.

It belongs to the cytochrome P450 family. It depends on heme as a cofactor.

It is found in the endoplasmic reticulum membrane. It localises to the microsome membrane. It carries out the reaction an organic molecule + reduced [NADPH--hemoprotein reductase] + O2 = an alcohol + oxidized [NADPH--hemoprotein reductase] + H2O + H(+). Cytochromes P450 are a group of heme-thiolate monooxygenases. In liver microsomes, this enzyme is involved in an NADPH-dependent electron transport pathway. It oxidizes a variety of structurally unrelated compounds, including steroids, fatty acids, and xenobiotics. In Rattus norvegicus (Rat), this protein is Cytochrome P450 3A1 (Cyp3a1).